Consider the following 265-residue polypeptide: Flap endonuclease Xni (265 aa).

Residue aspartate 111 participates in Mg(2+) binding. The 94-residue stretch at 167–260 (VVPAQLVDFW…NLREIRYPPA (94 aa)) folds into the 5'-3' exonuclease domain. K(+) is bound by residues leucine 178, valine 189, and isoleucine 192. The interaction with DNA stretch occupies residues 191 to 196 (GIGPKT).

Belongs to the Xni family. Mg(2+) is required as a cofactor. The cofactor is K(+).

Functionally, has flap endonuclease activity. During DNA replication, flap endonucleases cleave the 5'-overhanging flap structure that is generated by displacement synthesis when DNA polymerase encounters the 5'-end of a downstream Okazaki fragment. The polypeptide is Flap endonuclease Xni (Aeromonas salmonicida (strain A449)).